The sequence spans 500 residues: NADH-quinone oxidoreductase subunit N (500 aa).

The next 14 membrane-spanning stretches (helical) occupy residues 6 to 26 (SWIA…IALV), 40 to 60 (ALTL…ALGG), 69 to 89 (MVVV…ALMI), 106 to 125 (GGEF…VMIS), 129 to 151 (FLVL…ALRR), 164 to 184 (FVLG…LYGA), 207 to 227 (LVFG…AVPF), 239 to 259 (PTAV…AMTI), 276 to 296 (MLAL…VAQT), 302 to 322 (LAFS…AGVV), 337 to 357 (MFYA…ILLL), 380 to 400 (YAGV…LVGF), 417 to 437 (SYLV…FYYL), and 464 to 484 (IVLA…SSLM).

Belongs to the complex I subunit 2 family. NDH-1 is composed of 14 different subunits. Subunits NuoA, H, J, K, L, M, N constitute the membrane sector of the complex.

It is found in the cell inner membrane. It carries out the reaction a quinone + NADH + 5 H(+)(in) = a quinol + NAD(+) + 4 H(+)(out). Its function is as follows. NDH-1 shuttles electrons from NADH, via FMN and iron-sulfur (Fe-S) centers, to quinones in the respiratory chain. The immediate electron acceptor for the enzyme in this species is believed to be ubiquinone. Couples the redox reaction to proton translocation (for every two electrons transferred, four hydrogen ions are translocated across the cytoplasmic membrane), and thus conserves the redox energy in a proton gradient. The protein is NADH-quinone oxidoreductase subunit N of Polaromonas naphthalenivorans (strain CJ2).